Reading from the N-terminus, the 59-residue chain is Cecropin-A (59 aa).

An N-terminal signal peptide occupies residues 1–23; it reads MNFNKLFVIVLLAALAFFGQAEA. Leucine amide is present on leucine 57.

The protein belongs to the cecropin family.

The protein resides in the secreted. Its function is as follows. Cecropins have lytic and antibacterial activity against several Gram-positive and Gram-negative bacteria. In Culex pipiens pipiens (Northern house mosquito), this protein is Cecropin-A (CECA).